The following is a 352-amino-acid chain: DNA polymerase IV (352 aa).

The UmuC domain occupies 3 to 187 (VLFVDFDYFY…LDIADVPGIG (185 aa)). Mg(2+) is bound by residues Asp-7 and Asp-105. Glu-106 is a catalytic residue.

The protein belongs to the DNA polymerase type-Y family. Monomer. Interacts with the PCNA heterotrimer via PCNA1. Mg(2+) serves as cofactor.

The protein resides in the cytoplasm. It carries out the reaction DNA(n) + a 2'-deoxyribonucleoside 5'-triphosphate = DNA(n+1) + diphosphate. Poorly processive, error-prone DNA polymerase involved in untargeted mutagenesis. Copies undamaged DNA at stalled replication forks, which arise in vivo from mismatched or misaligned primer ends. These misaligned primers can be extended by PolIV. Exhibits no 3'-5' exonuclease (proofreading) activity. It is involved in translesional synthesis. The sequence is that of DNA polymerase IV (dbh) from Saccharolobus solfataricus (strain ATCC 35092 / DSM 1617 / JCM 11322 / P2) (Sulfolobus solfataricus).